Reading from the N-terminus, the 387-residue chain is 3-ketoacyl-CoA thiolase (387 aa).

Cysteine 91 functions as the Acyl-thioester intermediate in the catalytic mechanism. Active-site proton acceptor residues include histidine 343 and cysteine 373.

Belongs to the thiolase-like superfamily. Thiolase family. As to quaternary structure, heterotetramer of two alpha chains (FadB) and two beta chains (FadA).

Its subcellular location is the cytoplasm. The catalysed reaction is an acyl-CoA + acetyl-CoA = a 3-oxoacyl-CoA + CoA. Its pathway is lipid metabolism; fatty acid beta-oxidation. In terms of biological role, catalyzes the final step of fatty acid oxidation in which acetyl-CoA is released and the CoA ester of a fatty acid two carbons shorter is formed. The polypeptide is 3-ketoacyl-CoA thiolase (Shigella dysenteriae serotype 1 (strain Sd197)).